Consider the following 393-residue polypeptide: MLKRTTKIAFLSSFVALSAFSVSAEDMQFGVTPPQITAQTYVLMDYNSGAILTALNPDQRQYPASLTKMMTSYVVGVALKQGKIHNTDMVTIGESAWGRNFPDSSKMFLDLNTQVSVADLNRGVIVVSGNDATVALAEHISGNVPNFVETMNKYVQQFGLKNTNFTTPHGLDDPNQYSSARDMAIIGAHIIRDLPEEYKIYSEKNFTFNKIKQANRNGLLWDKTINVDGMKTGHTSQAGYNLVASATTSNNMRLISVVMGVPTYKGREVESKKLLQWGFANFETFKTLEAGKEISEQRVYYGDKNSVKLGALMDHFITIPKGKQSEVKARYELADKNLQAPLVKGQVIGKVVYQLDGKDIASANLQVMNDVGEAGIFGKLWDWLVLTVKGLFS.

An N-terminal signal peptide occupies residues 1 to 18; sequence MLKRTTKIAFLSSFVALS. Ser65 acts as the Acyl-ester intermediate in catalysis. Lys68 serves as the catalytic Proton acceptor. Ser128 is an active-site residue. Lys231 lines the substrate pocket.

It belongs to the peptidase S11 family.

The protein localises to the cell inner membrane. It carries out the reaction Preferential cleavage: (Ac)2-L-Lys-D-Ala-|-D-Ala. Also transpeptidation of peptidyl-alanyl moieties that are N-acyl substituents of D-alanine.. Its pathway is cell wall biogenesis; peptidoglycan biosynthesis. Functionally, removes C-terminal D-alanyl residues from sugar-peptide cell wall precursors. The chain is D-alanyl-D-alanine carboxypeptidase DacA (dacA) from Haemophilus influenzae (strain ATCC 51907 / DSM 11121 / KW20 / Rd).